Here is a 437-residue protein sequence, read N- to C-terminus: Cobyrinate a,c-diamide synthase (437 aa).

The region spanning 243–433 (IAAIAYDSAF…SHFHFSSARG (191 aa)) is the GATase cobBQ-type domain. Residue Cys324 is the Nucleophile of the active site.

Belongs to the CobB/CbiA family. Mg(2+) is required as a cofactor.

It carries out the reaction cob(II)yrinate + 2 L-glutamine + 2 ATP + 2 H2O = cob(II)yrinate a,c diamide + 2 L-glutamate + 2 ADP + 2 phosphate + 2 H(+). The protein operates within cofactor biosynthesis; adenosylcobalamin biosynthesis; cob(II)yrinate a,c-diamide from sirohydrochlorin (anaerobic route): step 10/10. Its function is as follows. Catalyzes the ATP-dependent amidation of the two carboxylate groups at positions a and c of cobyrinate, using either L-glutamine or ammonia as the nitrogen source. This Sulfurisphaera tokodaii (strain DSM 16993 / JCM 10545 / NBRC 100140 / 7) (Sulfolobus tokodaii) protein is Cobyrinate a,c-diamide synthase.